Reading from the N-terminus, the 280-residue chain is S-methyl-5'-thioadenosine phosphorylase (280 aa).

Residues Ser18, 60-61 (RH), and 93-94 (TA) each bind phosphate. A substrate-binding site is contributed by Met196. Residue Thr197 coordinates phosphate. Residue 220–222 (DYD) coordinates substrate.

The protein belongs to the PNP/MTAP phosphorylase family. MTAP subfamily. In terms of assembly, homotrimer.

The protein localises to the cytoplasm. Its subcellular location is the nucleus. The enzyme catalyses S-methyl-5'-thioadenosine + phosphate = 5-(methylsulfanyl)-alpha-D-ribose 1-phosphate + adenine. It functions in the pathway amino-acid biosynthesis; L-methionine biosynthesis via salvage pathway; S-methyl-5-thio-alpha-D-ribose 1-phosphate from S-methyl-5'-thioadenosine (phosphorylase route): step 1/1. In terms of biological role, catalyzes the reversible phosphorylation of S-methyl-5'-thioadenosine (MTA) to adenine and 5-methylthioribose-1-phosphate. Involved in the breakdown of MTA, a major by-product of polyamine biosynthesis. Responsible for the first step in the methionine salvage pathway after MTA has been generated from S-adenosylmethionine. Has broad substrate specificity with 6-aminopurine nucleosides as preferred substrates. The chain is S-methyl-5'-thioadenosine phosphorylase from Ciona intestinalis (Transparent sea squirt).